Here is a 196-residue protein sequence, read N- to C-terminus: Ribosome maturation factor RimP (196 aa).

The tract at residues 164–196 (LAPQKPNKPGPKKPGHDKKKPSNEPAAGKPRAE) is disordered. The span at 173–182 (GPKKPGHDKK) shows a compositional bias: basic residues.

This sequence belongs to the RimP family.

The protein localises to the cytoplasm. Required for maturation of 30S ribosomal subunits. In Xanthomonas campestris pv. campestris (strain B100), this protein is Ribosome maturation factor RimP.